Consider the following 89-residue polypeptide: MVRFNCFITEQDGQGDHVTQIKRFNINRFRFRRYFRVFNHRFNGFSRFRFCLGDFTLFLGNNRCWLVIGFSVCFDNRRRLNDYFRLNDN.

The protein is Putative protein p54 (54) of Acyrthosiphon pisum secondary endosymbiont phage 1 (Bacteriophage APSE-1).